Consider the following 365-residue polypeptide: Putative F-box protein At1g31000 (365 aa).

One can recognise an F-box domain in the interval 15–62 (NDSDSVRIDIVIEIVKRLPLKDVSRFLLVSKLWSEIIRSPYFIRSFPF).

The sequence is that of Putative F-box protein At1g31000 from Arabidopsis thaliana (Mouse-ear cress).